A 437-amino-acid polypeptide reads, in one-letter code: AA9 family lytic polysaccharide monooxygenase H (437 aa).

The first 21 residues, 1–21, serve as a signal peptide directing secretion; sequence MNLSLFTLALVACYSSQLAAA. Histidine 22 contacts Cu(2+). A disulfide bond links cysteine 64 and cysteine 193. N-linked (GlcNAc...) asparagine glycosylation is found at asparagine 67 and asparagine 79. Residue histidine 104 coordinates Cu(2+). Asparagine 120 and asparagine 138 each carry an N-linked (GlcNAc...) asparagine glycan. Positions 178 and 188 each coordinate O2. Tyrosine 190 provides a ligand contact to Cu(2+). N-linked (GlcNAc...) asparagine glycosylation is found at asparagine 252 and asparagine 307. The region spanning 392–437 is the Chitin-binding type-1 domain; the sequence is DGKCGDGNGQTCKGSLLGECCSQVGYCGSSESYCGVGCQGNFGVCG. Intrachain disulfides connect cysteine 395–cysteine 412, cysteine 403–cysteine 418, cysteine 411–cysteine 425, and cysteine 429–cysteine 436.

Belongs to the polysaccharide monooxygenase AA9 family. Cu(2+) serves as cofactor.

The protein localises to the secreted. The enzyme catalyses [(1-&gt;4)-beta-D-glucosyl]n+m + reduced acceptor + O2 = 4-dehydro-beta-D-glucosyl-[(1-&gt;4)-beta-D-glucosyl]n-1 + [(1-&gt;4)-beta-D-glucosyl]m + acceptor + H2O.. Functionally, lytic polysaccharide monooxygenase (LPMO) that depolymerizes crystalline and amorphous polysaccharides via the oxidation of scissile alpha- or beta-(1-4)-glycosidic bonds, yielding C1 and C4 oxidation products. Catalysis by LPMOs requires the reduction of the active-site copper from Cu(II) to Cu(I) by a reducing agent and H(2)O(2) or O(2) as a cosubstrate. The chain is AA9 family lytic polysaccharide monooxygenase H from Botryotinia fuckeliana (strain B05.10) (Noble rot fungus).